We begin with the raw amino-acid sequence, 326 residues long: L-Ala--D-Glu endopeptidase (326 aa).

Residues 1-19 form the signal peptide; it reads MKVLLSALLLLLFAFEPSA. His-204, Asp-208, His-292, and His-294 together coordinate Zn(2+).

Belongs to the peptidase M23B family. Requires Zn(2+) as cofactor.

Functionally, L-Ala--D-Glu endopeptidase involved in production of single L-alanine side chains from tetrapeptides in the spore cortex peptidoglycan. Therefore, is required for the endospore cortex maturation. The protein is L-Ala--D-Glu endopeptidase (lytH) of Bacillus subtilis (strain 168).